The following is a 396-amino-acid chain: Nitrate regulatory protein (396 aa).

The region spanning 37–284 is the NIT domain; that stretch reads GQISALVHML…VDLLNAADAL (248 aa). The region spanning 323–384 is the ANTAR domain; the sequence is LQQLSGQLAS…RMVEIARALL (62 aa).

In terms of biological role, nitrate- and nitrite-responsive positive regulator for nasFEDCBA operon expression. NasR protein binds to the factor-independent terminator site located in the nasF operon leader RNA to effect transcription antitermination. This Klebsiella oxytoca protein is Nitrate regulatory protein (nasR).